The following is a 187-amino-acid chain: Large ribosomal subunit protein uL13 (187 aa).

The protein belongs to the universal ribosomal protein uL13 family.

The protein is Large ribosomal subunit protein uL13 (rpl13a) of Dictyostelium discoideum (Social amoeba).